The primary structure comprises 349 residues: Ribosomal RNA small subunit methyltransferase H (349 aa).

Residues 34-36 (GGH), Asp54, Phe81, Asp102, and Gln109 each bind S-adenosyl-L-methionine. The interval 328–349 (SRTGSVQHGQAKHKGVVQRGGS) is disordered.

Belongs to the methyltransferase superfamily. RsmH family.

Its subcellular location is the cytoplasm. It catalyses the reaction cytidine(1402) in 16S rRNA + S-adenosyl-L-methionine = N(4)-methylcytidine(1402) in 16S rRNA + S-adenosyl-L-homocysteine + H(+). In terms of biological role, specifically methylates the N4 position of cytidine in position 1402 (C1402) of 16S rRNA. This is Ribosomal RNA small subunit methyltransferase H from Dehalococcoides mccartyi (strain ATCC BAA-2100 / JCM 16839 / KCTC 5957 / BAV1).